Consider the following 61-residue polypeptide: Large ribosomal subunit protein eL29y (61 aa).

The disordered stretch occupies residues methionine 1 to glutamate 61. Residues lysine 15–proline 31 show a composition bias toward basic residues.

The protein belongs to the eukaryotic ribosomal protein eL29 family.

The sequence is that of Large ribosomal subunit protein eL29y (RPL29B) from Arabidopsis thaliana (Mouse-ear cress).